Here is a 132-residue protein sequence, read N- to C-terminus: Putative esterase Ta0293 (132 aa).

The protein belongs to the thioesterase PaaI family.

This chain is Putative esterase Ta0293, found in Thermoplasma acidophilum (strain ATCC 25905 / DSM 1728 / JCM 9062 / NBRC 15155 / AMRC-C165).